The following is a 229-amino-acid chain: Aspartate-rich protein 1 (229 aa).

A disordered region spans residues 84-106 (SEEDNDDAKILPSPVQGSSEDNL).

In Homo sapiens (Human), this protein is Aspartate-rich protein 1 (DRICH1).